A 487-amino-acid chain; its full sequence is MLRVIKEALTFDDVLLVPAHSTVLPNTADLSTQLTKTIRLNIPMLSAAMDTVTETKLAISLAQEGGIGFIHKNMSIERQAERVRKVKKFESGIVSDPVTVSPTLSLAELSELVKKNGFASFPVVDDEKNLVGIITGRDTRFVTDLNKTVADFMTPKARLVTVKRNASRDEIFGLMHTHRVEKVLVVSDDFKLKGMITLKDYQKSEQKPQACKDEFGRLRVGAAVGAGPGNEERIDALVKAGVDVLLIDSSHGHSEGVLQRVRETRAKYPDLPIVAGNVATAEGAIALADAGASAVKVGIGPGSICTTRIVTGVGVPQITAIADAAEALKDRGIPVIADGGIRFSGDISKAIAAGASCVMVGSMFAGTEEAPGEIELYQGRAFKSYRGMGSLGAMSKGSSDRYFQSDNAADKLVPEGIEGRIPYKGFLKEIIHQQMGGLRSCMGLTGCATIDELRTKAQFVRISGAGIQESHVHDVTITKEAPNYRMG.

CBS domains lie at 93–149 (IVSD…NKTV) and 153–214 (MTPK…CKDE). NAD(+) contacts are provided by residues D248, 248–250 (DSS), and 298–300 (GIG). Residues G300 and G302 each coordinate K(+). S303 contributes to the IMP binding site. C305 is a K(+) binding site. The Thioimidate intermediate role is filled by C305. IMP contacts are provided by residues 338-340 (DGG), 361-362 (GS), and 385-389 (YRGMG). Catalysis depends on R401, which acts as the Proton acceptor. E415 contacts IMP. K(+) contacts are provided by E469, S470, and H471.

This sequence belongs to the IMPDH/GMPR family. As to quaternary structure, homotetramer. K(+) is required as a cofactor.

It carries out the reaction IMP + NAD(+) + H2O = XMP + NADH + H(+). It functions in the pathway purine metabolism; XMP biosynthesis via de novo pathway; XMP from IMP: step 1/1. Mycophenolic acid (MPA) is a non-competitive inhibitor that prevents formation of the closed enzyme conformation by binding to the same site as the amobile flap. In contrast, mizoribine monophosphate (MZP) is a competitive inhibitor that induces the closed conformation. MPA is a potent inhibitor of mammalian IMPDHs but a poor inhibitor of the bacterial enzymes. MZP is a more potent inhibitor of bacterial IMPDH. In terms of biological role, catalyzes the conversion of inosine 5'-phosphate (IMP) to xanthosine 5'-phosphate (XMP), the first committed and rate-limiting step in the de novo synthesis of guanine nucleotides, and therefore plays an important role in the regulation of cell growth. The sequence is that of Inosine-5'-monophosphate dehydrogenase from Pasteurella multocida (strain Pm70).